The sequence spans 612 residues: MAEATEPKEVSSGSQGQPEGAVIEGPGEPGAADLEGREASEGAAEAPRDLGEGAEAMASGKEEGGCGQDGEIGEVQAQDPRPGPGTETPGTSGAPGEAEAAECDSEGALIPQSGGGAKRQQVQGTSSGLDAQGEAPEVPEDARREPEDPKASEAGEEAESGQEALGGSAPESQINPEVQGPVGDNMDTEAPAGEPQGSEGEPQGGGESSPQPQDEAIEIAAAEVGGHEPGELAGASAADAKGEGETLRKDGFEEAAPEEARVDSGENGFEEAAPEEARVDSGENRDQGRLQEETGEEEARPESGLKGPCEEAIQEKAPDGSLDGEEAKSTGHEESQVELSNHLAEETSAQGGEELGRVNGRRENGPASEEGDLGQEHDITLFVKAGSDGESIGNCPFSQRLFMILWLKGVIFNVTTVDLKRKPADLQNLAPGTNPPFMTFDGEVKTDVNKIEEFLEEKLVPPRYPKLGTQHPESNSAGNDVFAKFSAFIKNTKKDANDIYEKNLLRALKKLDSYLNSPLPDEIDAYSTEDVTVSQRKFLDGDELTLADCNLLPKLHIIKIVAKKYRGFEFPSEMTGIWRYLNNAYARDEFTNTCPADQEIEHAYSDAAKRMK.

The segment at 1 to 373 is disordered; sequence MAEATEPKEV…NGPASEEGDL (373 aa). The segment covering 34–51 has biased composition (basic and acidic residues); that stretch reads LEGREASEGAAEAPRDLG. Serine 40 bears the Phosphoserine mark. Positions 84-96 are enriched in low complexity; it reads PGTETPGTSGAPG. Positions 120–129 are enriched in polar residues; that stretch reads QQVQGTSSGL. The segment covering 140–153 has biased composition (basic and acidic residues); it reads EDARREPEDPKASE. The span at 208-223 shows a compositional bias: low complexity; the sequence is SSPQPQDEAIEIAAAE. 2 stretches are compositionally biased toward basic and acidic residues: residues 240–264 and 275–303; these read AKGEGETLRKDGFEEAAPEEARVDS and EEARVDSGENRDQGRLQEETGEEEARPES. Serine 264, serine 303, and serine 321 each carry phosphoserine. 2 stretches are compositionally biased toward basic and acidic residues: residues 325 to 335 and 354 to 364; these read EEAKSTGHEES and ELGRVNGRREN. Phosphoserine is present on serine 368. The short motif at 395–398 is the G-site element; sequence CPFS. Residues 397-417 form a helical membrane-spanning segment; that stretch reads FSQRLFMILWLKGVIFNVTTV. In terms of domain architecture, GST C-terminal spans 441–612; it reads DGEVKTDVNK…AYSDAAKRMK (172 aa).

The protein belongs to the chloride channel CLIC family. Monomer (soluble state). Interacts with dopamine receptors DRD2, DRD3 and DRD4. In terms of processing, phosphorylated. In terms of tissue distribution, predominantly expressed in brain, pituitary and stomach. In adult brain, it is restricted to the choroid plexus, the striatal proliferative subventricular zone and the cerebellum where it colocalizes with the D(3)R in the Purkinje cells of the lobules IX and X.

The protein resides in the cytoplasm. It localises to the cell membrane. It carries out the reaction chloride(in) = chloride(out). With respect to regulation, channel activity is redox- and pH-regulated. Inhibited by IAA-94. Its function is as follows. In the soluble state, catalyzes glutaredoxin-like thiol disulfide exchange reactions with reduced glutathione as electron donor. Can insert into membranes and form voltage-dependent chloride-selective channels. The channel opens upon membrane depolarization at positive voltages and closes at negative membrane voltages. May play a critical role in water-secreting cells, possibly through the regulation of chloride ion transport. This Rattus norvegicus (Rat) protein is Chloride intracellular channel protein 6 (Clic6).